The chain runs to 268 residues: Probable intron-encoded DNA endonuclease 1 (268 aa).

The protein belongs to the LAGLIDADG endonuclease family.

It localises to the mitochondrion. In terms of biological role, mitochondrial DNA endonuclease involved in intron homing. This Mycosarcoma maydis (Corn smut fungus) protein is Probable intron-encoded DNA endonuclease 1 (hegI1).